We begin with the raw amino-acid sequence, 361 residues long: Septin-1 (361 aa).

One can recognise a Septin-type G domain in the interval 32–304 (KGFEFTLMVV…ENYRSDRLAK (273 aa)). The G1 motif stretch occupies residues 42 to 49 (GESGLGKS). GTP is bound by residues 42–49 (GESGLGKS), Thr76, Gly102, 181–189 (KADCLTKKE), Gly239, and Arg254. A G3 motif region spans residues 99-102 (DTPG). Residues 180-183 (AKAD) are G4 motif. Position 319 is a phosphoserine (Ser319).

Belongs to the TRAFAC class TrmE-Era-EngA-EngB-Septin-like GTPase superfamily. Septin GTPase family. Likely part of a multicomponent septin complex that includes pnut. Interacts with pnut. Interacts with park. In terms of processing, ubiquitinated by park, leading to its degradation by the proteasome. Accumulates at the leading edge of the cleavage furrow in dividing cells and cellularizing embryos (at protein level). Also accumulates at the leading edge of the embryo epithelium during dorsal closure, in the embryonic neurons, and at the baso-lateral surfaces of ovarian follicle cells (at protein level).

Its subcellular location is the cytoplasm. Involved in cytokinesis. May be involved in p53-dependent apoptosis. The chain is Septin-1 from Drosophila melanogaster (Fruit fly).